Consider the following 325-residue polypeptide: Ribosomal RNA small subunit methyltransferase H (325 aa).

Residues 33–35, D52, L87, D101, and Q108 each bind S-adenosyl-L-methionine; that span reads GGH. The tract at residues 285 to 325 is disordered; it reads AEPAGEVEKADNPRAASVRLRAAERTAPNPDRTQPTIGGAS. Polar residues predominate over residues 315–325; it reads DRTQPTIGGAS.

Belongs to the methyltransferase superfamily. RsmH family.

The protein localises to the cytoplasm. It carries out the reaction cytidine(1402) in 16S rRNA + S-adenosyl-L-methionine = N(4)-methylcytidine(1402) in 16S rRNA + S-adenosyl-L-homocysteine + H(+). Its function is as follows. Specifically methylates the N4 position of cytidine in position 1402 (C1402) of 16S rRNA. The protein is Ribosomal RNA small subunit methyltransferase H of Frankia alni (strain DSM 45986 / CECT 9034 / ACN14a).